A 144-amino-acid polypeptide reads, in one-letter code: PE family protein PE9 (144 aa).

The PE domain occupies 1 to 87 (MSYMIATPAA…RTLTGGCGVF (87 aa)). Residues 98-124 (AAEHRAAGAGRRQRRRRSGDGQWRLRQ) form a disordered region.

This sequence belongs to the mycobacterial PE family. In terms of assembly, forms a complex with PE10. The complex interacts with human TLR4.

It localises to the secreted. Its subcellular location is the cell wall. The protein localises to the cell surface. Functionally, together with PE10, induces macrophage apoptosis through human Toll-like receptor 4 (TLR4) signaling pathway. Interaction with TLR4 leads to increased levels of phospho-IRF-3, increase in the transcript levels of IFN-beta and pro-apoptotic genes, up-regulation of IL-10, down-regulation of IL-1b and enhanced levels of macrophage apoptosis. In Mycobacterium tuberculosis (strain ATCC 25618 / H37Rv), this protein is PE family protein PE9.